The sequence spans 173 residues: Cytochrome c-type biogenesis protein CcmE (173 aa).

Residues 1-8 (MNPRRKSR) lie on the Cytoplasmic side of the membrane. Residues 9–29 (FKLVIFVVLGIAIASGLMLYA) form a helical; Signal-anchor for type II membrane protein membrane-spanning segment. The Periplasmic segment spans residues 30-173 (LRQNIDLFYT…RDRQEKEGAK (144 aa)). 2 residues coordinate heme: H131 and Y135. The disordered stretch occupies residues 152–173 (GIKAADLKGESARDRQEKEGAK). Over residues 156–173 (ADLKGESARDRQEKEGAK) the composition is skewed to basic and acidic residues.

This sequence belongs to the CcmE/CycJ family.

It is found in the cell inner membrane. Its function is as follows. Heme chaperone required for the biogenesis of c-type cytochromes. Transiently binds heme delivered by CcmC and transfers the heme to apo-cytochromes in a process facilitated by CcmF and CcmH. This Haemophilus influenzae (strain PittEE) protein is Cytochrome c-type biogenesis protein CcmE.